The sequence spans 166 residues: Putative signal peptidase complex catalytic subunit SEC11B (166 aa).

At 1–6 the chain is on the cytoplasmic side; that stretch reads MNKWRL. Residues 7–24 traverse the membrane as a helical; Signal-anchor for type II membrane protein segment; sequence YYQVLNFGMIVSSALMIW. Over 25–166 the chain is Extracellular; that stretch reads KGLMVITGSE…LGLFVLVHRE (142 aa). S43 is an active-site residue.

It belongs to the peptidase S26B family.

Its subcellular location is the membrane. It catalyses the reaction Cleavage of hydrophobic, N-terminal signal or leader sequences from secreted and periplasmic proteins.. Putative component of some signal peptidase complex which removes signal peptides from nascent proteins as they are translocated into the lumen of the endoplasmic reticulum. The sequence is that of Putative signal peptidase complex catalytic subunit SEC11B (SEC11B) from Homo sapiens (Human).